A 530-amino-acid chain; its full sequence is MDLSEYGINNVTDVIRNPSFEVLFEEETKPGLEGYEKGIVTELGAVSVDTGIFTGRSPKDKFIVKDDTTRDTLWWADQGKNDNKAIDQKVWNELKVLVTKQLSGKRLFVVDGYCGTNPDTRLCIRVITEVAWQAHFVKNMFIRPTEEELASFKPDFVVMNGAKCTNEKWEEQGLNSENFTVFNLTEKMQLIGGTWYGGEMKKGMFAMMNYFLPLQGIASMHCSANMGENGDVAVFFGLSGTGKTTLSTDPKRALIGDDEHGWDDNGVFNFEGGCYAKTINLSKEAEPDIYNAIRRDALLENVTVRADGAIDFDDNSKTENTRVSYPIYHIENIVKPVSKGGHANKVIFLSADAFGVLPPVSKLTPAQTKYHFLSGFTAKLAGTERGITEPTPTFSACFGNAFLTLHPTQYAEVLVKRMEAAGAEAYLVNTGWNGTGKRISIQDTRAIIDAILNGSIDNAETKEMPIFNLEVPTSLPGVNPEILDPRDTYTDPLQWESKAQDLATRFINNFEKYTDTTEGAELVAAGPQLD.

Residues arginine 56, tyrosine 196, and lysine 202 each coordinate substrate. Residues lysine 202, histidine 221, and 237 to 245 each bind ATP; that span reads GLSGTGKTT. Mn(2+)-binding residues include lysine 202 and histidine 221. Mn(2+) is bound at residue aspartate 258. Residues glutamate 286, arginine 322, 438 to 439, and threonine 444 each bind ATP; that span reads RI. Position 322 (arginine 322) interacts with substrate.

The protein belongs to the phosphoenolpyruvate carboxykinase (ATP) family. Monomer. The cofactor is Mn(2+).

It localises to the cytoplasm. It carries out the reaction oxaloacetate + ATP = phosphoenolpyruvate + ADP + CO2. Its pathway is carbohydrate biosynthesis; gluconeogenesis. Its function is as follows. Involved in the gluconeogenesis. Catalyzes the conversion of oxaloacetate (OAA) to phosphoenolpyruvate (PEP) through direct phosphoryl transfer between the nucleoside triphosphate and OAA. This chain is Phosphoenolpyruvate carboxykinase (ATP), found in Photobacterium profundum (strain SS9).